A 1978-amino-acid polypeptide reads, in one-letter code: Centrosomal protein Cep290 (1978 aa).

A necessary and sufficient for function in ciliogenesis, transition zone (TZ) assembly, and recruitment of DZP1 and Mks1 to the TZ. Also required for subcellular localization to the cilium basal body region spans residues 1 to 650 (MSMDIPETVS…SLCEVPEIAE (650 aa)). Coiled-coil stretches lie at residues 76-384 (DRRL…KSQQ) and 471-505 (IERLTLKLRTSEELRLQLKLEKSELRRKLLELQQD). The segment at 271–296 (QLEGKSISSGQTNSSNSQSQQEEEHA) is disordered. Positions 276-290 (SISSGQTNSSNSQSQ) are enriched in low complexity. The tract at residues 663 to 688 (ATRPSSPTEATMGLRRPTVPDPEEKP) is disordered. 3 coiled-coil regions span residues 853-887 (FEEQQQELLTWRSKQAELQRETKQLEGLLHVANEQ), 922-970 (LAKV…TQQD), and 1192-1233 (ADAV…SRSE). Basic and acidic residues predominate over residues 1313–1324 (KEKLRQKPEVPV). The interval 1313-1397 (KEKLRQKPEV…EKQDTEELKE (85 aa)) is disordered. A compositionally biased stretch (low complexity) spans 1329–1341 (STDSRSSSSSDSS). Residues 1379 to 1391 (VTEEPEGEEEKQD) show a composition bias toward acidic residues. 2 coiled-coil regions span residues 1405–1439 (IKDLKDKLEYSERSLKTREEEVDILKEKLKLCQER) and 1501–1654 (LNRT…LESK). 2 disordered regions span residues 1684 to 1714 (VGVSKFAPSPSESPETYTGPSSECSSPAHHH) and 1859 to 1884 (LKDGRRSTESRSSMDSTPAEAARLQQ). Over residues 1693 to 1708 (PSESPETYTGPSSECS) the composition is skewed to polar residues. A coiled-coil region spans residues 1726–1935 (IEALKSRIEL…KEQLVKKTQL (210 aa)).

In terms of assembly, interacts (via N-terminus) with DZIP1. Expressed in sensory neurons type I and in germ cells (at protein level).

It is found in the cytoplasm. Its subcellular location is the cytoskeleton. The protein resides in the cilium basal body. It localises to the microtubule organizing center. The protein localises to the centrosome. It is found in the centriole. Functionally, essential for ciliogenesis in sensory neurons and spermatocytes. During neuron and spermatocyte ciliogenesis, essential for initiating transition zone (TZ) assembly and is required for the formation of diverse connections between microtubules and between microtubules and the membrane. Regulates TZ assembly by recruiting DZIP1 to the plasma membrane where it promotes early ciliary membrane formation resulting in the initiation of TZ assembly. The sequence is that of Centrosomal protein Cep290 from Drosophila melanogaster (Fruit fly).